The primary structure comprises 275 residues: Elongation factor Ts (275 aa).

An involved in Mg(2+) ion dislocation from EF-Tu region spans residues 76-79; the sequence is TDFV.

This sequence belongs to the EF-Ts family.

It is found in the cytoplasm. Associates with the EF-Tu.GDP complex and induces the exchange of GDP to GTP. It remains bound to the aminoacyl-tRNA.EF-Tu.GTP complex up to the GTP hydrolysis stage on the ribosome. In Mycobacterium avium (strain 104), this protein is Elongation factor Ts.